The primary structure comprises 218 residues: Glutathione S-transferase Mu 2 (218 aa).

In terms of domain architecture, GST N-terminal spans 2 to 88; sequence PMTLGYWDIR…YLGRKHNLCG (87 aa). 7–8 provides a ligand contact to glutathione; the sequence is YW. A phosphoserine mark is found at Ser-27 and Ser-44. Residues 43 to 46, Lys-50, 59 to 60, and 72 to 73 contribute to the glutathione site; these read RSQW, NL, and QS. The 125-residue stretch at 90-214 folds into the GST C-terminal domain; that stretch reads TEEERIRVDV…SKPIFAKMAF (125 aa). Residue Tyr-116 coordinates substrate. Ser-117 carries the post-translational modification Phosphoserine.

Belongs to the GST superfamily. Mu family. Homodimer or heterodimer.

Its subcellular location is the cytoplasm. The enzyme catalyses RX + glutathione = an S-substituted glutathione + a halide anion + H(+). It carries out the reaction 11(S)-hydroxy-14(S),15(S)-epoxy-(5Z,8Z,12E)-eicosatrienoate + glutathione = (11S,15S)-dihydroxy-14(R)-S-glutathionyl-(5Z,8Z,12E)-eicosatrienoate. In terms of biological role, conjugation of reduced glutathione to a wide number of exogenous and endogenous hydrophobic electrophiles. Participates in the formation of novel hepoxilin regioisomers. This Rattus norvegicus (Rat) protein is Glutathione S-transferase Mu 2.